The sequence spans 231 residues: Large ribosomal subunit protein uL1 (231 aa).

It belongs to the universal ribosomal protein uL1 family. Part of the 50S ribosomal subunit.

In terms of biological role, binds directly to 23S rRNA. The L1 stalk is quite mobile in the ribosome, and is involved in E site tRNA release. Protein L1 is also a translational repressor protein, it controls the translation of the L11 operon by binding to its mRNA. This chain is Large ribosomal subunit protein uL1, found in Desulforudis audaxviator (strain MP104C).